Here is a 710-residue protein sequence, read N- to C-terminus: MLQSMGDGEISISPYDTAWVALVEDDGGGRRQPQFPSSLEWISSNQLADGSWGDAGTFSIFDRILNTLACVVALRSWNIHPHKTDKGIWFMKKNMCRIDEENLEHMPIGFEVALPSLIDIAKKLEIDIPTQTRGLQEIYARREIKLKKIPRDIMHQVPTTLLHSLEGMAGLKWEKLLKLQSQDGSFLFSPSSTAFALQQTRDHGCLKYLTNHIHKFNGGVPNVYPVDLFEHLWAVDRLQRLGLSRYFQPEIEECIAYVHRQWTEKGICWARNSQVEDIDDTAMGFRLLRLHGYEVSADVFRHFKSDGGEFFCFKGQSTQAVTGMYNLYRASQLMFPGENILVDAARFSANFLQLKRANNDLLDKWIITKDLPGEVGYALDVPWYASLPRVETRFYLDQYGGDDDVWIGKTLYRMPYVNNNKYLELAKLDYNNCQALHQQEWQNIQKWYRSCSLGEFGMTERSLLQTYYVAAASVFEPEKSQERLAWAKTAILMETISSHFEFQQLSRDQKRAFITEFEHDSILKYTNGGRYKRRSSLVGTLVRTLNHLSLDILLAHGRDIHQPLKNAWCKWLNSWEEGGDAELLLRTLNLMSGGGRRRRWASEELLSSNPKHEQLLKATIGVCDKLRLFQRRKVQGGNGCMNATGITTVEIESEMRELVKLVVTRSSSEDLDSEIKQNFLTIARSFYYAAYCNQGTINFHIAKVLFEKVL.

Lys145 provides a ligand contact to substrate. Mg(2+)-binding residues include Asp277 and Asp279. The short motif at 277–280 is the DXDD motif element; sequence DIDD. Residue Lys364 participates in substrate binding.

This sequence belongs to the terpene synthase family. Tpsc subfamily. Mg(2+) serves as cofactor. Expressed in germinating seeds and leaves.

The enzyme catalyses (2E,6E,10E)-geranylgeranyl diphosphate = ent-copalyl diphosphate. The protein operates within plant hormone biosynthesis; gibberellin biosynthesis. It participates in secondary metabolite biosynthesis; terpenoid biosynthesis. Its function is as follows. Involved in the biosynthesis of ent-kaurene diterpenoids natural products such as oridonin, miltiradiene, eriocalyxin B and nezukol, known to exhibit antitumor, anti-inflammatory and antibacterial activities, and in the production of gibberellins phytohormones. Catalyzes the conversion of (2E,6E,10E)-geranylgeranyl diphosphate (GGPP) to ent-copalyl diphosphate (ent-CPP). The protein is Ent-copalyl diphosphate synthase 1 of Isodon eriocalyx (Plectranthus eriocalyx).